A 203-amino-acid chain; its full sequence is Recombination protein RecR (203 aa).

The C4-type zinc finger occupies 56–71 (CAVCGNVSDDERCRIC). A Toprim domain is found at 79-179 (ALVCVVEEPK…TVTRIASGLP (101 aa)).

This sequence belongs to the RecR family.

May play a role in DNA repair. It seems to be involved in an RecBC-independent recombinational process of DNA repair. It may act with RecF and RecO. This chain is Recombination protein RecR, found in Mycobacterium ulcerans (strain Agy99).